The sequence spans 398 residues: Tryptophan synthase beta chain (398 aa).

An N6-(pyridoxal phosphate)lysine modification is found at K89.

Belongs to the TrpB family. Tetramer of two alpha and two beta chains. It depends on pyridoxal 5'-phosphate as a cofactor.

The catalysed reaction is (1S,2R)-1-C-(indol-3-yl)glycerol 3-phosphate + L-serine = D-glyceraldehyde 3-phosphate + L-tryptophan + H2O. Its pathway is amino-acid biosynthesis; L-tryptophan biosynthesis; L-tryptophan from chorismate: step 5/5. Functionally, the beta subunit is responsible for the synthesis of L-tryptophan from indole and L-serine. This is Tryptophan synthase beta chain from Methanopyrus kandleri (strain AV19 / DSM 6324 / JCM 9639 / NBRC 100938).